The chain runs to 783 residues: Transcription factor Sp3 (783 aa).

Residues 1 to 12 (MTAPEKPVKQEE) are compositionally biased toward basic and acidic residues. Residues 1–55 (MTAPEKPVKQEEMAALDVDGGGGGGGHGEYLQQQQQQQQQHGNGAAAAAAQDTQP) form a disordered region. Gly residues predominate over residues 19-28 (DGGGGGGGHG). The segment covering 29-51 (EYLQQQQQQQQQHGNGAAAAAAQ) has biased composition (low complexity). Ser72 bears the Phosphoserine mark. Lys122 participates in a covalent cross-link: Glycyl lysine isopeptide (Lys-Gly) (interchain with G-Cter in SUMO). The tract at residues 140–239 (QYVLPLQNLQ…IPQTGQVQVQ (100 aa)) is transactivation domain (Gln-rich). Positions 302 to 340 (GQAMDSSDNSERTGERVSPDVNETNADTDLFVPTSSSSQ) are disordered. Positions 310–319 (NSERTGERVS) are enriched in basic and acidic residues. Over residues 322–340 (VNETNADTDLFVPTSSSSQ) the composition is skewed to polar residues. The interval 352–501 (QQNTNSLTTT…TPVQTLTLGQ (150 aa)) is transactivation domain (Gln-rich). Positions 463–471 (ITWQTFQVQ) match the 9aaTAD motif. A repressor domain region spans residues 536 to 622 (IQLHPGENAD…RGTNLGKKKQ (87 aa)). Lys553 bears the N6-acetyllysine; alternate mark. Lys553 is covalently cross-linked (Glycyl lysine isopeptide (Lys-Gly) (interchain with G-Cter in SUMO); alternate). Lys553 is covalently cross-linked (Glycyl lysine isopeptide (Lys-Gly) (interchain with G-Cter in SUMO1); alternate). A Glycyl lysine isopeptide (Lys-Gly) (interchain with G-Cter in SUMO2); alternate cross-link involves residue Lys553. Residues Ser565 and Ser568 each carry the phosphoserine modification. Lys595 is covalently cross-linked (Glycyl lysine isopeptide (Lys-Gly) (interchain with G-Cter in SUMO2)). A C2H2-type 1 zinc finger spans residues 623–647 (HICHIPGCGKVYGKTSHLRAHLRWH). Ser648 carries the phosphoserine modification. 2 C2H2-type zinc fingers span residues 653–677 (FICN…RRTH) and 683–705 (FVCP…IKTH).

This sequence belongs to the Sp1 C2H2-type zinc-finger protein family. Interacts with HLTF; the interaction may be required for basal transcriptional activity of HLTF. Interacts with HDAC1; the interaction deacetylates SP3 and regulates its transcriptional activity. Interacts with HDAC2 (preferably the CK2-phosphorylated form); the interaction deacetylates SP3 and regulates its transcriptional activity. Ceramides can also regulate acetylation/deacetylation events through altering the interaction of HDAC with SP3. Interacts with MEIS2 isoform Meis2D and PBX1 isoform PBX1a. Acetylated by histone acetyltransferase p300, deacetylated by HDACs. Acetylation/deacetylation states regulate transcriptional activity. Acetylation appears to activate transcription. Alternate sumoylation and acetylation at Lys-553 also control transcriptional activity. In terms of processing, sumoylated on all isoforms. Sumoylated on 2 sites in longer isoforms with Lys-553 being the major site. Sumoylation at this site promotes nuclear localization to the nuclear periphery, nuclear dots and PML nuclear bodies. Sumoylation on Lys-553 represses the transactivation activity, except for the largest isoform which has little effect on transactivation. Alternate sumoylation and acetylation at Lys-553 also control transcriptional activity.

The protein localises to the nucleus. The protein resides in the PML body. In terms of biological role, transcriptional factor that can act as an activator or repressor depending on isoform and/or post-translational modifications. Binds to GT and GC boxes promoter elements. Competes with SP1 for the GC-box promoters. Weak activator of transcription but can activate a number of genes involved in different processes such as cell-cycle regulation, hormone-induction and house-keeping. The polypeptide is Transcription factor Sp3 (Sp3) (Mus musculus (Mouse)).